A 199-amino-acid polypeptide reads, in one-letter code: 5'-deoxynucleotidase YfbR (199 aa).

Substrate contacts are provided by residues 18–19 (RW) and His33. Residues 30 to 142 (VSEHSLQVAM…VKQADALCAY (113 aa)) enclose the HD domain. Residues His33, His68, and Asp69 each contribute to the a divalent metal cation site. Substrate-binding positions include Asp69, 77-80 (DLPT), and Asp137. An a divalent metal cation-binding site is contributed by Asp137.

The protein belongs to the 5DNU family. In terms of assembly, homodimer. A divalent metal cation is required as a cofactor.

The protein localises to the cytoplasm. It catalyses the reaction a 2'-deoxyribonucleoside 5'-phosphate + H2O = a 2'-deoxyribonucleoside + phosphate. Catalyzes the strictly specific dephosphorylation of 2'-deoxyribonucleoside 5'-monophosphates. The chain is 5'-deoxynucleotidase YfbR from Shigella flexneri serotype 5b (strain 8401).